Consider the following 271-residue polypeptide: Co-chaperone protein DjlA (271 aa).

Residues 1–6 (MQYWGK) are Periplasmic-facing. The helical transmembrane segment at 7–31 (IIGVAVALLMGGGFWGVVLGLLIGH) threads the bilayer. The Cytoplasmic portion of the chain corresponds to 32-271 (MFDKARSRKM…ELIKQQKGFK (240 aa)). The J domain occupies 205 to 271 (DACNVLGVKP…ELIKQQKGFK (67 aa)).

Homodimer.

The protein localises to the cell inner membrane. In terms of biological role, regulatory DnaK co-chaperone. Direct interaction between DnaK and DjlA is needed for the induction of the wcaABCDE operon, involved in the synthesis of a colanic acid polysaccharide capsule, possibly through activation of the RcsB/RcsC phosphotransfer signaling pathway. The colanic acid capsule may help the bacterium survive conditions outside the host. The sequence is that of Co-chaperone protein DjlA from Escherichia coli (strain K12).